A 619-amino-acid chain; its full sequence is Chaperone protein DnaK (619 aa).

Thr179 is subject to Phosphothreonine; by autocatalysis. The tract at residues 584-619 (QAKAQGAAGPQPGAQAQGQPNDGGKEDVVEAEVVDK) is disordered. The segment covering 585 to 605 (AKAQGAAGPQPGAQAQGQPND) has biased composition (low complexity). Basic and acidic residues predominate over residues 606 to 619 (GGKEDVVEAEVVDK).

Belongs to the heat shock protein 70 family.

Functionally, acts as a chaperone. The chain is Chaperone protein DnaK from Elusimicrobium minutum (strain Pei191).